The sequence spans 456 residues: Histidine--tRNA ligase (456 aa).

It belongs to the class-II aminoacyl-tRNA synthetase family. Homodimer.

It is found in the cytoplasm. It catalyses the reaction tRNA(His) + L-histidine + ATP = L-histidyl-tRNA(His) + AMP + diphosphate + H(+). In Christiangramia forsetii (strain DSM 17595 / CGMCC 1.15422 / KT0803) (Gramella forsetii), this protein is Histidine--tRNA ligase.